Consider the following 799-residue polypeptide: Probable inorganic carbon transporter subunit DabA (799 aa).

Zn(2+)-binding residues include Cys303, Asp305, His479, and Cys494. The disordered stretch occupies residues 574–598 (AGAAAERSEALNGADPDKGVSETAS).

Belongs to the inorganic carbon transporter (TC 9.A.2) DabA family. Forms a complex with DabB. Zn(2+) serves as cofactor.

It is found in the cell membrane. In terms of biological role, part of an energy-coupled inorganic carbon pump. The sequence is that of Probable inorganic carbon transporter subunit DabA from Natronomonas pharaonis (strain ATCC 35678 / DSM 2160 / CIP 103997 / JCM 8858 / NBRC 14720 / NCIMB 2260 / Gabara) (Halobacterium pharaonis).